Consider the following 279-residue polypeptide: Oxygen-dependent coproporphyrinogen-III oxidase (279 aa).

Serine 102 provides a ligand contact to substrate. A divalent metal cation is bound by residues histidine 106 and histidine 116. The active-site Proton donor is histidine 116. 118–120 (NTR) is a binding site for substrate. 2 residues coordinate a divalent metal cation: histidine 149 and histidine 179. Residues 244–279 (YVEFNLLYDRGTKFGLMTDGNVEAILMSLPPEVKFN) form an important for dimerization region.

This sequence belongs to the aerobic coproporphyrinogen-III oxidase family. In terms of assembly, homodimer. It depends on a divalent metal cation as a cofactor.

The protein resides in the cytoplasm. The catalysed reaction is coproporphyrinogen III + O2 + 2 H(+) = protoporphyrinogen IX + 2 CO2 + 2 H2O. Its pathway is porphyrin-containing compound metabolism; protoporphyrin-IX biosynthesis; protoporphyrinogen-IX from coproporphyrinogen-III (O2 route): step 1/1. In terms of biological role, involved in the heme biosynthesis. Catalyzes the aerobic oxidative decarboxylation of propionate groups of rings A and B of coproporphyrinogen-III to yield the vinyl groups in protoporphyrinogen-IX. In Rickettsia rickettsii (strain Iowa), this protein is Oxygen-dependent coproporphyrinogen-III oxidase.